The following is a 267-amino-acid chain: X-box-binding protein 1 (267 aa).

The Cytoplasmic portion of the chain corresponds to 1 to 180 (MVVVAAAPSA…VQAQLSPPQN (180 aa)). Residues 35-60 (VPGPRAAGSEASGTPQARKRQRLTHL) form a disordered region. The residue at position 61 (Ser61) is a Phosphoserine. A bZIP domain is found at 63–126 (EEKALRRKLK…HGLVIENQEL (64 aa)). The basic motif stretch occupies residues 65–87 (KALRRKLKNRVAAQTARDRKKAR). The tract at residues 69 to 85 (RKLKNRVAAQTARDRKK) is nuclear localization signal (NLS). Positions 91–126 (LEQQVVDLEEENQKLQLENQLLREKTHGLVIENQEL) are leucine-zipper. Residues 181 to 198 (IFPWILTLLPLQILSLIS) traverse the membrane as a helical; Signal-anchor for type II membrane protein segment. Topologically, residues 199–267 (FWAFWTSWTL…FVLTMYTPSL (69 aa)) are lumenal.

This sequence belongs to the bZIP family. In terms of assembly, isoform 1 interacts with HM13. Isoform 1 interacts with RNF139; the interaction induces ubiquitination and degradation of isoform 1. Isoform 1 interacts (via luminal domain) with DERL1; the interaction obviates the need for ectodomain shedding prior HM13/SPP-mediated XBP1 isoform 1 cleavage. Isoform 1 interacts with HDAC3 and AKT1; the interactions occur in endothelial cell (EC) under disturbed flow. Isoform 1 interacts with the oncoprotein FOS. Interacts with SIRT1. Post-translationally, isoform 1 is ubiquitinated, leading to proteasome-mediated degradation in response to ER stress. X-box-binding protein 1, cytoplasmic form and luminal form are produced by intramembrane proteolytic cleavage of ER membrane-anchored isoform 1 triggered by HM13/SPP in a DERL1-RNF139-dependent and VCP/p97-independent manner. X-box-binding protein 1, luminal form is ubiquitinated leading to proteasomal degradation. In terms of processing, acetylated by EP300; acetylation positively regulates the transcriptional activity of XBP1. Deacetylated by SIRT1; deacetylation negatively regulates the transcriptional activity of XBP1.

The protein localises to the nucleus. It localises to the endoplasmic reticulum. It is found in the cytoplasm. Its subcellular location is the endoplasmic reticulum membrane. The protein resides in the membrane. In terms of biological role, functions as a transcription factor during endoplasmic reticulum (ER) stress by regulating the unfolded protein response (UPR). Required for cardiac myogenesis and hepatogenesis during embryonic development, and the development of secretory tissues such as exocrine pancreas and salivary gland. Involved in terminal differentiation of B lymphocytes to plasma cells and production of immunoglobulins. Modulates the cellular response to ER stress in a PIK3R-dependent manner. Binds to the cis-acting X box present in the promoter regions of major histocompatibility complex class II genes. Involved in VEGF-induced endothelial cell (EC) proliferation and retinal blood vessel formation during embryonic development but also for angiogenesis in adult tissues under ischemic conditions. Functions also as a major regulator of the UPR in obesity-induced insulin resistance and type 2 diabetes for the management of obesity and diabetes prevention. Acts as a weak transcriptional factor. Together with HDAC3, contributes to the activation of NFE2L2-mediated HMOX1 transcription factor gene expression in a PI(3)K/mTORC2/Akt-dependent signaling pathway leading to EC survival under disturbed flow/oxidative stress. Binds to the ER stress response element (ERSE) upon ER stress. Binds to the consensus 5'-GATGACGTG[TG]N(3)[AT]T-3' sequence related to cAMP responsive element (CRE)-like sequences. Associates preferentially to the HDAC3 gene promoter region in a static flow-dependent manner. Binds to the CDH5/VE-cadherin gene promoter region. The chain is X-box-binding protein 1 from Rattus norvegicus (Rat).